Consider the following 313-residue polypeptide: Porphobilinogen deaminase (313 aa).

C241 is subject to S-(dipyrrolylmethanemethyl)cysteine.

Belongs to the HMBS family. In terms of assembly, monomer. The cofactor is dipyrromethane.

It catalyses the reaction 4 porphobilinogen + H2O = hydroxymethylbilane + 4 NH4(+). Its pathway is porphyrin-containing compound metabolism; protoporphyrin-IX biosynthesis; coproporphyrinogen-III from 5-aminolevulinate: step 2/4. It participates in porphyrin-containing compound metabolism; chlorophyll biosynthesis. Its function is as follows. Tetrapolymerization of the monopyrrole PBG into the hydroxymethylbilane pre-uroporphyrinogen in several discrete steps. In Chlorobium phaeobacteroides (strain BS1), this protein is Porphobilinogen deaminase.